The sequence spans 368 residues: Cystathionine beta-lyase (368 aa).

The residue at position 221 (Lys-221) is an N6-(pyridoxal phosphate)lysine.

Belongs to the class-II pyridoxal-phosphate-dependent aminotransferase family. MalY/PatB cystathionine beta-lyase subfamily. Requires pyridoxal 5'-phosphate as cofactor.

The catalysed reaction is L,L-cystathionine + H2O = L-homocysteine + pyruvate + NH4(+). It carries out the reaction an S-substituted L-cysteine + H2O = a thiol + pyruvate + NH4(+). It participates in amino-acid biosynthesis; L-methionine biosynthesis via de novo pathway; L-homocysteine from L-cystathionine: step 1/1. Its function is as follows. Catalyzes the transformation of cystathionine to homocysteine. In Corynebacterium glutamicum (Brevibacterium saccharolyticum), this protein is Cystathionine beta-lyase (metC).